Reading from the N-terminus, the 428-residue chain is Elongation factor 1-alpha (428 aa).

The 221-residue stretch at 5–225 (KPVLNVAFIG…DKFQPPEKPT (221 aa)) folds into the tr-type G domain. A G1 region spans residues 14–21 (GHVDAGKS). 14–21 (GHVDAGKS) is a GTP binding site. Residue serine 21 coordinates Mg(2+). The tract at residues 70–74 (GVTID) is G2. Residues 91–94 (DCPG) form a G3 region. GTP contacts are provided by residues 91 to 95 (DCPGH) and 149 to 152 (NKMD). The G4 stretch occupies residues 149 to 152 (NKMD). Positions 189-191 (ASL) are G5.

Belongs to the TRAFAC class translation factor GTPase superfamily. Classic translation factor GTPase family. EF-Tu/EF-1A subfamily.

It localises to the cytoplasm. The enzyme catalyses GTP + H2O = GDP + phosphate + H(+). Its function is as follows. GTP hydrolase that promotes the GTP-dependent binding of aminoacyl-tRNA to the A-site of ribosomes during protein biosynthesis. The polypeptide is Elongation factor 1-alpha (Methanocaldococcus jannaschii (strain ATCC 43067 / DSM 2661 / JAL-1 / JCM 10045 / NBRC 100440) (Methanococcus jannaschii)).